The chain runs to 460 residues: Zinc transporter 6 (460 aa).

The Cytoplasmic portion of the chain corresponds to 1-33; sequence MGTIHLFRKSQRSLVGKLTHEFRLVAADRRSWK. Residues 34–54 form a helical membrane-spanning segment; the sequence is ILLFGAINLICIGFLLMWCSS. Residues 55 to 64 are Extracellular-facing; that stretch reads TNSIALTAYT. A helical membrane pass occupies residues 65–85; that stretch reads YLTIFDLFSLITCLISYWVMV. Residues 86–98 are Cytoplasmic-facing; that stretch reads KKPSPVYSFGFER. The helical transmembrane segment at 99-119 threads the bilayer; it reads FEVLAVFASTVLAQLGALFIL. The Extracellular segment spans residues 120-134; it reads KESAERFLEQPEIHT. A helical transmembrane segment spans residues 135–155; that stretch reads GRLLVGTFVALFFNLFTMLSV. Over 156-200 the chain is Cytoplasmic; sequence RNKPFAYVSEAASTSWLQEHVADLSRSICGIIPGLSSIFLPRMNP. Residues 201–221 traverse the membrane as a helical segment; that stretch reads FVLIDIAGALALCITYMLIEI. Residues 222–228 lie on the Extracellular side of the membrane; the sequence is NNYYAVD. A helical membrane pass occupies residues 229–249; that stretch reads TASAIAIALMTFGTMYPMSVY. Over 250–460 the chain is Cytoplasmic; the sequence is SGKVLLQTTP…GTNTRGQSRP (211 aa). The disordered stretch occupies residues 372 to 392; that stretch reads PVTSTPAKPSSPPPEFSFNTP.

This sequence belongs to the cation diffusion facilitator (CDF) transporter (TC 2.A.4) family. SLC30A subfamily. Heterodimer with SLC30A5; form a functional zinc ion transmembrane transporter.

It is found in the golgi apparatus. It localises to the trans-Golgi network membrane. Its function is as follows. Has probably no intrinsic transporter activity but together with SLC30A5 forms a functional zinc ion:proton antiporter heterodimer, mediating zinc entry into the lumen of organelles along the secretory pathway. As part of that zinc ion:proton antiporter, contributes to zinc ion homeostasis within the early secretory pathway and regulates the activation and folding of enzymes like alkaline phosphatases and enzymes involved in phosphatidylinositol glycan anchor biosynthesis. The chain is Zinc transporter 6 (SLC30A6) from Gallus gallus (Chicken).